We begin with the raw amino-acid sequence, 121 residues long: Fluoride-specific ion channel FluC 1 (121 aa).

4 helical membrane passes run 3 to 23, 29 to 49, 67 to 87, and 92 to 112; these read YLYI…LSML, IPLG…SIGA, TGLL…VTLF, and FILF…SCYL. 2 residues coordinate Na(+): Gly71 and Thr74.

The protein belongs to the fluoride channel Fluc/FEX (TC 1.A.43) family.

The protein resides in the cell membrane. The catalysed reaction is fluoride(in) = fluoride(out). Its activity is regulated as follows. Na(+) is not transported, but it plays an essential structural role and its presence is essential for fluoride channel function. Fluoride-specific ion channel. Important for reducing fluoride concentration in the cell, thus reducing its toxicity. In Staphylococcus epidermidis (strain ATCC 35984 / DSM 28319 / BCRC 17069 / CCUG 31568 / BM 3577 / RP62A), this protein is Fluoride-specific ion channel FluC 1.